We begin with the raw amino-acid sequence, 142 residues long: 5a,11a-dehydrotetracycline/5a,11a-dehydrooxytetracycline reductase (142 aa).

The protein belongs to the pyridoxamine 5'-phosphate oxidase family.

It carries out the reaction tetracycline + oxidized coenzyme F420-(gamma-L-Glu)(n) + H(+) = 5a,11a-dehydrotetracycline + reduced coenzyme F420-(gamma-L-Glu)(n). The enzyme catalyses oxytetracycline + oxidized coenzyme F420-(gamma-L-Glu)(n) + H(+) = 5a,11a-dehydrooxytetracycline + reduced coenzyme F420-(gamma-L-Glu)(n). The protein operates within antibiotic biosynthesis; oxytetracycline biosynthesis. Involved in the biosynthesis of the antibiotics tetracycline and oxytetracycline. Catalyzes the C(5) reduction of 5a,11a-dehydrooxytetracycline to yield oxytetracycline as a major product. Also catalyzes the C(12) reduction of 5a,11a-dehydrotetracycline (12-dehydrotetracycline) to produce tetracycline as a minor product. The chain is 5a,11a-dehydrotetracycline/5a,11a-dehydrooxytetracycline reductase from Streptomyces rimosus subsp. rimosus (strain ATCC 10970 / DSM 40260 / JCM 4667 / NRRL 2234).